Consider the following 155-residue polypeptide: MSKKGGYKRTGVDVRYGDESVARFINAVMLDGKKDVATKIVYDAFAIIGEKMTEETPLEVYHRAMSNIAPVVEVRSKRVGGATYQIPMEVKPSRRGALAFRWLKQYATKRGGRSMAEKLAAELMDAAGEQGASVKKRDEVHRMADANKAFAHFRF.

It belongs to the universal ribosomal protein uS7 family. As to quaternary structure, part of the 30S ribosomal subunit. Contacts proteins S9 and S11.

One of the primary rRNA binding proteins, it binds directly to 16S rRNA where it nucleates assembly of the head domain of the 30S subunit. Is located at the subunit interface close to the decoding center, probably blocks exit of the E-site tRNA. The polypeptide is Small ribosomal subunit protein uS7 (Chlorobium phaeovibrioides (strain DSM 265 / 1930) (Prosthecochloris vibrioformis (strain DSM 265))).